We begin with the raw amino-acid sequence, 72 residues long: Large ribosomal subunit protein bL31 (72 aa).

Residues cysteine 16, cysteine 18, cysteine 38, and cysteine 41 each contribute to the Zn(2+) site.

The protein belongs to the bacterial ribosomal protein bL31 family. Type A subfamily. Part of the 50S ribosomal subunit. The cofactor is Zn(2+).

In terms of biological role, binds the 23S rRNA. The polypeptide is Large ribosomal subunit protein bL31 (Aromatoleum aromaticum (strain DSM 19018 / LMG 30748 / EbN1) (Azoarcus sp. (strain EbN1))).